A 389-amino-acid chain; its full sequence is Abscission/NoCut checkpoint regulator (389 aa).

The FYVE-type zinc-finger motif lies at 1–58; the sequence is MESRCYGCAVKFTLFKKEYGCKNCGRAFCNGCLSFSALVPRAGNTQQKVCKQCHTILT. Zn(2+) contacts are provided by Cys-5, Cys-8, Cys-21, Cys-24, Cys-29, Cys-32, Cys-50, and Cys-53. Phosphoserine is present on Ser-69. Positions 99-112 match the MIM1-A motif; sequence DQAIAERLARLRQE. Lys-132 is covalently cross-linked (Glycyl lysine isopeptide (Lys-Gly) (interchain with G-Cter in SUMO2)). 2 disordered regions span residues 158 to 177 and 204 to 227; these read PSHT…QAQQ and QNDL…SQSL. Residues 167–177 are compositionally biased toward low complexity; it reads QAPDTRTQAQQ. The span at 214–226 shows a compositional bias: polar residues; sequence SQRTNSQGQASQS. Ser-219 carries the post-translational modification Phosphoserine. A coiled-coil region spans residues 226-261; the sequence is SLEEEKYKLLAEAAVELQEENTRQERILALAKRLAV. Residues 252–265 carry the MIM1-B motif; that stretch reads ILALAKRLAVLKGQ. At Ser-280 the chain carries Phosphoserine.

As to quaternary structure, interacts (via MIM1-B) with VPS4A; interaction takes place at the midbody ring following cytokinesis checkpoint activation.

Its subcellular location is the cytoplasm. It localises to the cytoskeleton. The protein resides in the microtubule organizing center. It is found in the centrosome. The protein localises to the cleavage furrow. Its subcellular location is the midbody. It localises to the midbody ring. Its function is as follows. Key regulator of abscission step in cytokinesis: part of the cytokinesis checkpoint, a process required to delay abscission to prevent both premature resolution of intercellular chromosome bridges and accumulation of DNA damage. Together with CHMP4C, required to retain abscission-competent VPS4 (VPS4A and/or VPS4B) at the midbody ring until abscission checkpoint signaling is terminated at late cytokinesis. Deactivation of AURKB results in dephosphorylation of CHMP4C followed by its dissociation from ZFYVE19/ANCHR and VPS4 and subsequent abscission. This Mus musculus (Mouse) protein is Abscission/NoCut checkpoint regulator (Zfyve19).